The sequence spans 5263 residues: Fibroin heavy chain (5263 aa).

An N-terminal signal peptide occupies residues 1-21 (MRVKTFVILCCALQYVAYTNA). The highly repetitive stretch occupies residues 149-5206 (AAVGAGAGAG…GSGAGAGGSV (5058 aa)). C5260 and C5263 form a disulfide bridge.

As to quaternary structure, silk fibroin elementary unit consists in a disulfide-linked heavy and light chain and a p25 glycoprotein in molar ratios of 6:6:1. This results in a complex of approximately 2.3 MDa. In terms of processing, the interchain disulfide bridge is essential for the intracellular transport and secretion of fibroin. As to expression, produced exclusively in the posterior (PSG) section of silk glands, which are essentially modified salivary glands.

Functionally, core component of the silk filament; a strong, insoluble and chemically inert fiber. This chain is Fibroin heavy chain (FIBH), found in Bombyx mori (Silk moth).